The sequence spans 452 residues: Chromosomal replication initiator protein DnaA (452 aa).

The tract at residues 1–80 is domain I, interacts with DnaA modulators; sequence MSSTVSTLWR…NNDQFMVKIQ (80 aa). The tract at residues 80–114 is domain II; the sequence is QDGIKPTEKTTTNVEQKTQNENCHNEITSQQNYRS. Positions 115 to 332 are domain III, AAA+ region; sequence YLNKNHVFDN…GALNRVHAHA (218 aa). The ATP site is built by Gly160, Gly162, Lys163, and Thr164. A domain IV, binds dsDNA region spans residues 333 to 452; that stretch reads EFTGKAITID…WSNLIRTLSV (120 aa).

It belongs to the DnaA family. Oligomerizes as a right-handed, spiral filament on DNA at oriC.

Its subcellular location is the cytoplasm. Functionally, plays an essential role in the initiation and regulation of chromosomal replication. ATP-DnaA binds to the origin of replication (oriC) to initiate formation of the DNA replication initiation complex once per cell cycle. Binds the DnaA box (a 9 base pair repeat at the origin) and separates the double-stranded (ds)DNA. Forms a right-handed helical filament on oriC DNA; dsDNA binds to the exterior of the filament while single-stranded (ss)DNA is stabiized in the filament's interior. The ATP-DnaA-oriC complex binds and stabilizes one strand of the AT-rich DNA unwinding element (DUE), permitting loading of DNA polymerase. After initiation quickly degrades to an ADP-DnaA complex that is not apt for DNA replication. Binds acidic phospholipids. This chain is Chromosomal replication initiator protein DnaA, found in Histophilus somni (strain 129Pt) (Haemophilus somnus).